The primary structure comprises 89 residues: Large ribosomal subunit protein eL34 (89 aa).

Residues 1-22 (MPAPRYKSGSSKKVYRKAPGNS) are disordered.

This sequence belongs to the eukaryotic ribosomal protein eL34 family.

The sequence is that of Large ribosomal subunit protein eL34 from Methanococcus maripaludis (strain C7 / ATCC BAA-1331).